A 195-amino-acid polypeptide reads, in one-letter code: Penicillin-binding protein activator LpoB (195 aa).

A signal peptide spans 1-16 (MKKRALIVLAALVLAS). A lipid anchor (N-palmitoyl cysteine) is attached at Cys-17. Cys-17 carries the S-diacylglycerol cysteine lipid modification. Residues 19–51 (SRKPASPPAPIEPVPPPVTVSVQPPPPATSEPV) are disordered. Pro residues predominate over residues 23-51 (ASPPAPIEPVPPPVTVSVQPPPPATSEPV).

The protein belongs to the LpoB family. As to quaternary structure, interacts with PBP1b.

Its subcellular location is the cell outer membrane. In terms of biological role, regulator of peptidoglycan synthesis that is essential for the function of penicillin-binding protein 1B (PBP1b). In Sodalis glossinidius (strain morsitans), this protein is Penicillin-binding protein activator LpoB.